A 98-amino-acid chain; its full sequence is Large ribosomal subunit protein bL27 (98 aa).

Positions 1-10 (MELKMNLQLF) are excised as a propeptide. A disordered region spans residues 11–30 (AQKKGTGSSKNGRDSISKRL).

It belongs to the bacterial ribosomal protein bL27 family. Post-translationally, the N-terminus is cleaved by ribosomal processing cysteine protease Prp.

The protein is Large ribosomal subunit protein bL27 of Natranaerobius thermophilus (strain ATCC BAA-1301 / DSM 18059 / JW/NM-WN-LF).